The primary structure comprises 1433 residues: DNA-directed RNA polymerase subunit beta' (1433 aa).

Zn(2+) is bound by residues Cys66, Cys68, Cys81, and Cys84. Residues 328–347 are disordered; it reads RKSSAVKTDSNRPLKSLSDS. A compositionally biased stretch (polar residues) spans 329–346; sequence KSSAVKTDSNRPLKSLSD. 3 residues coordinate Mg(2+): Asp477, Asp479, and Asp481. Zn(2+)-binding residues include Cys825, Cys899, Cys906, and Cys909.

The protein belongs to the RNA polymerase beta' chain family. As to quaternary structure, the RNAP catalytic core consists of 2 alpha, 1 beta, 1 beta' and 1 omega subunit. When a sigma factor is associated with the core the holoenzyme is formed, which can initiate transcription. Mg(2+) serves as cofactor. The cofactor is Zn(2+).

It catalyses the reaction RNA(n) + a ribonucleoside 5'-triphosphate = RNA(n+1) + diphosphate. In terms of biological role, DNA-dependent RNA polymerase catalyzes the transcription of DNA into RNA using the four ribonucleoside triphosphates as substrates. The sequence is that of DNA-directed RNA polymerase subunit beta' from Christiangramia forsetii (strain DSM 17595 / CGMCC 1.15422 / KT0803) (Gramella forsetii).